Reading from the N-terminus, the 256-residue chain is 5'-nucleotidase SurE (256 aa).

D8, D9, S39, and N91 together coordinate a divalent metal cation.

The protein belongs to the SurE nucleotidase family. A divalent metal cation serves as cofactor.

It is found in the cytoplasm. It carries out the reaction a ribonucleoside 5'-phosphate + H2O = a ribonucleoside + phosphate. Its function is as follows. Nucleotidase that shows phosphatase activity on nucleoside 5'-monophosphates. This is 5'-nucleotidase SurE from Marinobacter nauticus (strain ATCC 700491 / DSM 11845 / VT8) (Marinobacter aquaeolei).